We begin with the raw amino-acid sequence, 264 residues long: MKIALGVEYNGKRYFGWQRQEKVLSVQEELEKALSFVANEKIDLFCAGRTDSGVHGTGQVVHFETEVVRPERAWAFGTNANLPDDIAVKWAKTADDEFHARFSATARRYRYLIYTNPLRSAVLPEGVTHCHLPLDHEKMHEAGQFLLGENDFSSFRAAQCQSKTPWRNVHHLQVTRHGRYIVVDIQANAFVHHMVRNIVGSLMEVGSGRQPVEWMKWLLEQRNRKLAAPTAKPQGLYLVRVTYPERFGIPLSPLGPLFLPDELV.

Catalysis depends on Asp51, which acts as the Nucleophile. Tyr109 is a binding site for substrate.

Belongs to the tRNA pseudouridine synthase TruA family. In terms of assembly, homodimer.

It carries out the reaction uridine(38/39/40) in tRNA = pseudouridine(38/39/40) in tRNA. Formation of pseudouridine at positions 38, 39 and 40 in the anticodon stem and loop of transfer RNAs. This Actinobacillus succinogenes (strain ATCC 55618 / DSM 22257 / CCUG 43843 / 130Z) protein is tRNA pseudouridine synthase A.